The primary structure comprises 96 residues: MALSEAEVRHVARLARIALSDEEIALMQAQLSAILDYIAMLQEVDVSNVPPTAQVTGLTTVWRPDVVGEMLTQEQALANAPDQQDGMFRVRAVFDE.

This sequence belongs to the GatC family. Heterotrimer of A, B and C subunits.

The catalysed reaction is L-glutamyl-tRNA(Gln) + L-glutamine + ATP + H2O = L-glutaminyl-tRNA(Gln) + L-glutamate + ADP + phosphate + H(+). It carries out the reaction L-aspartyl-tRNA(Asn) + L-glutamine + ATP + H2O = L-asparaginyl-tRNA(Asn) + L-glutamate + ADP + phosphate + 2 H(+). In terms of biological role, allows the formation of correctly charged Asn-tRNA(Asn) or Gln-tRNA(Gln) through the transamidation of misacylated Asp-tRNA(Asn) or Glu-tRNA(Gln) in organisms which lack either or both of asparaginyl-tRNA or glutaminyl-tRNA synthetases. The reaction takes place in the presence of glutamine and ATP through an activated phospho-Asp-tRNA(Asn) or phospho-Glu-tRNA(Gln). The protein is Aspartyl/glutamyl-tRNA(Asn/Gln) amidotransferase subunit C of Chloroflexus aurantiacus (strain ATCC 29366 / DSM 635 / J-10-fl).